The following is a 199-amino-acid chain: MKFSPLVDELIQSLRCLPGVGPKSAQRMAFQLLERDRKAGAKLADSLAKAMSDVGHCQSCRTFTEETYCPICVSTKRGHSDIICVVETPADVLAIEAGGHFSGRYFVLLGHLSPLDGVGPEELGLALLEQHLASGDVSELILATNPTVEGDATAHYIADMAKRHELMVSRIAHGVPVGGELEYVDSTTLALSFNGRLPI.

The C4-type zinc finger occupies 57-72; it reads CQSCRTFTEETYCPIC. One can recognise a Toprim domain in the interval 81–176; that stretch reads DIICVVETPA…MVSRIAHGVP (96 aa).

It belongs to the RecR family.

May play a role in DNA repair. It seems to be involved in an RecBC-independent recombinational process of DNA repair. It may act with RecF and RecO. The polypeptide is Recombination protein RecR (Shewanella halifaxensis (strain HAW-EB4)).